A 569-amino-acid polypeptide reads, in one-letter code: MRYSRLFGKTQREIPSDAETISHQLLLRSGMIAQLTAGVYSFMPLAWRSIQKIETIIRQEMNKAGCQELAMPVLQPVEIWQQSGREAPFGQTLFHLKDRKDRNLVLGPTHEEVITDLASRYIQSYRDLPQRLYQIQAKFRDEPRPRGGLIRVREFIMKDMYSFDASPEGLDDSYQTMKQAYESVYRRCGLESMVIDADSGAIGGKASHEFMIVAESGEDSIIYCPKCSYAANAEKAVFKKKTLSKETLKDLEEVATPGQKAISDVARFLAVKPENTLKAVFYMADGKFVMAVIRGDLDINEVKLKNLLKCNDLRLAEDGEVKAAGVVAGSASPVGLKNILIVADDSVENGSNFVAGANKDGFHLKNVNCGRDFRADKMADIALAAEGSACPFCDGTFASKRGVEVGHIFKLGTFLSERFGANFTDAEGVSHPIIMGCYGMGVGRLLAAAIEQNHDEKGIIWPMPIAPYQVYICGLFLDNPVVRESAEKIYKELEAKSIEVLFDDRELTAGVKFNDADLLGIPLRLTISPRNLDKGGVEFKLRRNKESELVPLDSIVERVIATIKSESDL.

It belongs to the class-II aminoacyl-tRNA synthetase family. ProS type 1 subfamily. In terms of assembly, homodimer.

The protein localises to the cytoplasm. The catalysed reaction is tRNA(Pro) + L-proline + ATP = L-prolyl-tRNA(Pro) + AMP + diphosphate. In terms of biological role, catalyzes the attachment of proline to tRNA(Pro) in a two-step reaction: proline is first activated by ATP to form Pro-AMP and then transferred to the acceptor end of tRNA(Pro). As ProRS can inadvertently accommodate and process non-cognate amino acids such as alanine and cysteine, to avoid such errors it has two additional distinct editing activities against alanine. One activity is designated as 'pretransfer' editing and involves the tRNA(Pro)-independent hydrolysis of activated Ala-AMP. The other activity is designated 'posttransfer' editing and involves deacylation of mischarged Ala-tRNA(Pro). The misacylated Cys-tRNA(Pro) is not edited by ProRS. In Dehalococcoides mccartyi (strain ATCC BAA-2100 / JCM 16839 / KCTC 5957 / BAV1), this protein is Proline--tRNA ligase.